The chain runs to 1046 residues: Arrestin-related trafficking adapter 3 (1046 aa).

A disordered region spans residues 115–141; it reads YPPTEQKSKKKMDASAPNESNNAANNF. Over residues 128 to 140 the composition is skewed to low complexity; sequence ASAPNESNNAANN. Residues S155 and S162 each carry the phosphoserine modification. Composition is skewed to low complexity over residues 168–179 and 198–210; these read SGLSSLNLSPLG and RSSS…GPSR. The interval 168-230 is disordered; sequence SGLSSLNLSP…ATSPSVSHHN (63 aa). A phosphoserine mark is found at S213 and S586. Positions 605–614 are enriched in polar residues; that stretch reads TRNSRQFNRN. Disordered regions lie at residues 605 to 627 and 651 to 820; these read TRNS…IFNS and PLSP…FAHS. Residues 669–694 show a composition bias toward low complexity; that stretch reads FDFSSDFISDAASGTTTTEVSSSESS. Residues 734-785 show a composition bias toward basic and acidic residues; it reads KNSDKNSSETLNKKESMSKIEENKHKRETTPKKRENRDVKSLSTPQREESKD. Positions 802 to 811 are enriched in low complexity; sequence LSLSSSLHSS. Residues S826 and S838 each carry the phosphoserine modification. A disordered region spans residues 868-889; sequence NHDKNELNRHSTNTSSTPASAR. Residues 877 to 889 show a composition bias toward polar residues; that stretch reads HSTNTSSTPASAR. S900 bears the Phosphoserine mark. A disordered region spans residues 986 to 1017; the sequence is QNSAESDHNNDIFTQGSGLTESSKNSDSEERF. The span at 996-1008 shows a compositional bias: polar residues; it reads DIFTQGSGLTESS. Phosphoserine occurs at positions 1022 and 1023.

This sequence belongs to the ALY1 family. Interacts with PCL6, PCL7 and RSP5. Post-translationally, ubiquitinated by RSP5. Phosphorylated by the cyclin-CDKs PCL6-PHO85 and PCL7-PHO85.

The protein localises to the cytoplasm. In terms of biological role, may regulate endocytosis by recruiting RSP5 ubiquitin ligase activity to specific plasma membrane proteins in response to extracellular stimuli. The chain is Arrestin-related trafficking adapter 3 (ALY2) from Saccharomyces cerevisiae (strain ATCC 204508 / S288c) (Baker's yeast).